We begin with the raw amino-acid sequence, 225 residues long: Endonuclease V (225 aa).

2 residues coordinate Mg(2+): aspartate 43 and aspartate 110. Interaction with target DNA regions lie at residues 139–141 (KSR) and 214–221 (HIYTQRLK).

This sequence belongs to the endonuclease V family. It depends on Mg(2+) as a cofactor.

Its subcellular location is the cytoplasm. The catalysed reaction is Endonucleolytic cleavage at apurinic or apyrimidinic sites to products with a 5'-phosphate.. In terms of biological role, DNA repair enzyme involved in the repair of deaminated bases. Selectively cleaves double-stranded DNA at the second phosphodiester bond 3' to a deoxyinosine leaving behind the intact lesion on the nicked DNA. In vitro, can also cleave single-stranded substrates with inosine, double-stranded DNA with apurinic sites, or DNA sites with uracil or a mismatched base. When present in molar excess, two protein molecules can bind to the same DNA substrate and effect cleavage of both strands (in vitro). The protein is Endonuclease V of Thermotoga maritima (strain ATCC 43589 / DSM 3109 / JCM 10099 / NBRC 100826 / MSB8).